A 335-amino-acid polypeptide reads, in one-letter code: Pyruvate dehydrogenase E1 component subunit beta (335 aa).

A thiamine diphosphate-binding site is contributed by Glu60. K(+) contacts are provided by Ala161, Ile162, and Asn166.

As to quaternary structure, heterodimer of an alpha and a beta chain. Thiamine diphosphate serves as cofactor.

The protein localises to the plastid. Its subcellular location is the chloroplast. It carries out the reaction N(6)-[(R)-lipoyl]-L-lysyl-[protein] + pyruvate + H(+) = N(6)-[(R)-S(8)-acetyldihydrolipoyl]-L-lysyl-[protein] + CO2. Functionally, the pyruvate dehydrogenase complex catalyzes the overall conversion of pyruvate to acetyl-CoA and CO(2). It contains multiple copies of three enzymatic components: pyruvate dehydrogenase (E1), dihydrolipoamide acetyltransferase (E2) and lipoamide dehydrogenase (E3). This is Pyruvate dehydrogenase E1 component subunit beta (pdhB) from Chlorokybus atmophyticus (Soil alga).